The chain runs to 64 residues: DNA-binding protein 7b (64 aa).

The protein belongs to the 7 kDa DNA-binding/endoribonuclease P2 family. Monomer.

It localises to the cytoplasm. Its function is as follows. Can constrain negative DNA supercoils. May be involved in maintaining the integrity of the genome at high temperature. In Saccharolobus islandicus (strain HVE10/4) (Sulfolobus islandicus), this protein is DNA-binding protein 7b.